Consider the following 215-residue polypeptide: N-(5'-phosphoribosyl)anthranilate isomerase (215 aa).

The protein belongs to the TrpF family.

The enzyme catalyses N-(5-phospho-beta-D-ribosyl)anthranilate = 1-(2-carboxyphenylamino)-1-deoxy-D-ribulose 5-phosphate. The protein operates within amino-acid biosynthesis; L-tryptophan biosynthesis; L-tryptophan from chorismate: step 3/5. This Chlorobium phaeobacteroides (strain DSM 266 / SMG 266 / 2430) protein is N-(5'-phosphoribosyl)anthranilate isomerase.